The sequence spans 593 residues: Alanine--tRNA ligase (593 aa).

The Zn(2+) site is built by His-456, His-460, Cys-558, and His-562.

This sequence belongs to the class-II aminoacyl-tRNA synthetase family. Zn(2+) serves as cofactor.

It localises to the cytoplasm. It carries out the reaction tRNA(Ala) + L-alanine + ATP = L-alanyl-tRNA(Ala) + AMP + diphosphate. Its function is as follows. Catalyzes the attachment of alanine to tRNA(Ala) in a two-step reaction: alanine is first activated by ATP to form Ala-AMP and then transferred to the acceptor end of tRNA(Ala). Also edits incorrectly charged Ser-tRNA(Ala) and Gly-tRNA(Ala) via its editing domain. This Borrelia hermsii (strain HS1 / DAH) protein is Alanine--tRNA ligase (alaS).